Consider the following 1171-residue polypeptide: APC-related protein 1 (1171 aa).

A disordered region spans residues 1–54; the sequence is MSSSSSDENETTIHSSSNPGSSGIYSQLKAGSSKRPSVRHDVSDAEDDEEPYEG. Residues 1–481 are required for interaction with bar-1 and hmp-2; sequence MSSSSSDENE…LSLRATRASP (481 aa). The segment covering 15–26 has biased composition (low complexity); the sequence is SSSNPGSSGIYS. One copy of the ARM repeat lies at 312–356; the sequence is NCLKVLANILSPDARFTTLVDSASGILKYVSQYLATNSSHLELRS. Disordered stretches follow at residues 587 to 617, 662 to 699, 720 to 741, 767 to 822, 837 to 936, and 995 to 1030; these read PVDD…NPGS, HPED…GTTV, RKTS…LEVE, EEMP…EMTT, PRSR…TMRI, and SSGS…SSLP. A required for interaction with pry-1 region spans residues 591–1171; it reads DLDIPTSTVM…NPKQMLVTIV (581 aa). Composition is skewed to polar residues over residues 595-617 and 666-697; these read PTST…NPGS and NQMT…SDGT. Residues 788 to 799 show a composition bias toward polar residues; sequence FSPSQKTTSSPA. Basic and acidic residues predominate over residues 857 to 874; it reads EPDRSSHSKNEEADRRDA. Composition is skewed to polar residues over residues 890-913 and 1002-1028; these read RGSS…SSED and LQKA…SVSS.

The protein belongs to the adenomatous polyposis coli (APC) family. Interacts (via N-terminus) with bar-1 and hmp-2; the interaction with hmp-2 is relatively weak. Interacts (via C-terminus) with pry-1 (via N-terminus). Probably associates with bar-1, gsk-3, pry-1 in a complex.

Its subcellular location is the cell junction. It is found in the adherens junction. It localises to the cytoplasm. The protein resides in the nucleus. Has a role in endoderm cell specification and pharyngeal development. Required for the migration of epithelial cells, organization of the anterior seam cells and ceh-13 expression during embryo morphogenesis. Prevents hyperactivation of the Wnt signaling pathway during endoderm development, probably by preventing hmp-2 nuclear translocation. During larval development, apr-1 is required for expression of lin-39 in P3-8.p. Shown to negatively regulate Wnt signaling in vulval precursor cells. Has a role in cell division by establishing the polarity of the mother cell which forms the asymmetries of the daughter nuclei. Thought to regulate export of wrm-1 from the nucleus possibly as part of a complex involving pry-1. This Caenorhabditis briggsae protein is APC-related protein 1.